The following is a 488-amino-acid chain: Cytochrome P450 71A24 (488 aa).

A helical transmembrane segment spans residues 3 to 23 (MMMMIILLLCSIILITILFFK). C433 provides a ligand contact to heme.

It belongs to the cytochrome P450 family. Heme is required as a cofactor.

The protein localises to the membrane. The sequence is that of Cytochrome P450 71A24 (CYP71A24) from Arabidopsis thaliana (Mouse-ear cress).